The primary structure comprises 699 residues: Glutamine--fructose-6-phosphate aminotransferase [isomerizing] (699 aa).

Cysteine 2 (nucleophile) is an active-site residue. The region spanning 2–303 is the Glutamine amidotransferase type-2 domain; the sequence is CGIFGYANFS…DNDIVHISNG (302 aa). 2 consecutive SIS domains span residues 377-516 and 544-689; these read HVSG…QNLV and SVKS…ADFP.

It catalyses the reaction D-fructose 6-phosphate + L-glutamine = D-glucosamine 6-phosphate + L-glutamate. Its pathway is nucleotide-sugar biosynthesis; UDP-N-acetyl-alpha-D-glucosamine biosynthesis; alpha-D-glucosamine 6-phosphate from D-fructose 6-phosphate: step 1/1. Its function is as follows. Involved in amino sugar synthesis (formation of chitin, supplies the amino sugars of asparagine-linked oligosaccharides of glycoproteins). In Encephalitozoon cuniculi (strain GB-M1) (Microsporidian parasite), this protein is Glutamine--fructose-6-phosphate aminotransferase [isomerizing] (GFA1).